The chain runs to 269 residues: MTKSIRFTKMHGAGNDYIYVNTMAYPIDNPEELSIAWSKPHTGIGSDGLVLIGSSDIADFSMHIYNADGSEAMMCGNASRCIGKYVYEAGLTQKNKVTLETLSGIKELQLKIEREEVTEVTVDMGMPAVGEMALEVEAGGEIYTGTVISMGNPHLVIFVDEMDQVGLASVGPLLECLPLFPDRTNVEFVQVLKPDEVRMRVWERGSGITQACGTGACATAVAGVVRGKTKRKTKVIMDGGPLTIEWDERSGKVFMTGGAVNVFEGFIKV.

Substrate is bound by residues N15 and N66. C75 functions as the Proton donor in the catalytic mechanism. Residues 76-77 (GN), N152, N185, and 203-204 (ER) contribute to the substrate site. C212 serves as the catalytic Proton acceptor. Residue 213-214 (GT) coordinates substrate.

It belongs to the diaminopimelate epimerase family. As to quaternary structure, homodimer.

The protein resides in the cytoplasm. The catalysed reaction is (2S,6S)-2,6-diaminopimelate = meso-2,6-diaminopimelate. The protein operates within amino-acid biosynthesis; L-lysine biosynthesis via DAP pathway; DL-2,6-diaminopimelate from LL-2,6-diaminopimelate: step 1/1. Functionally, catalyzes the stereoinversion of LL-2,6-diaminopimelate (L,L-DAP) to meso-diaminopimelate (meso-DAP), a precursor of L-lysine and an essential component of the bacterial peptidoglycan. This chain is Diaminopimelate epimerase, found in Parabacteroides distasonis (strain ATCC 8503 / DSM 20701 / CIP 104284 / JCM 5825 / NCTC 11152).